Reading from the N-terminus, the 374-residue chain is Peptide chain release factor 2 (374 aa).

At glutamine 256 the chain carries N5-methylglutamine.

The protein belongs to the prokaryotic/mitochondrial release factor family. Post-translationally, methylated by PrmC. Methylation increases the termination efficiency of RF2.

It is found in the cytoplasm. Functionally, peptide chain release factor 2 directs the termination of translation in response to the peptide chain termination codons UGA and UAA. The polypeptide is Peptide chain release factor 2 (Mycobacterium leprae (strain Br4923)).